Consider the following 206-residue polypeptide: Large ribosomal subunit protein uL4 (206 aa).

A disordered region spans residues 47–77; sequence TRAQKGRSDVTGSTRKQWRQKGTGRARTGAA.

Belongs to the universal ribosomal protein uL4 family. As to quaternary structure, part of the 50S ribosomal subunit.

Its function is as follows. One of the primary rRNA binding proteins, this protein initially binds near the 5'-end of the 23S rRNA. It is important during the early stages of 50S assembly. It makes multiple contacts with different domains of the 23S rRNA in the assembled 50S subunit and ribosome. Forms part of the polypeptide exit tunnel. The protein is Large ribosomal subunit protein uL4 of Nitrosomonas europaea (strain ATCC 19718 / CIP 103999 / KCTC 2705 / NBRC 14298).